Consider the following 227-residue polypeptide: Rho-related GTP-binding protein RhoN (227 aa).

Residue 14–21 (GDAECGKT) coordinates GTP. Residues 36–44 (YVPTVFENY) carry the Effector region motif. Residues 61–65 (DTSGS) and 119–122 (CKLD) contribute to the GTP site. The segment at 186–227 (HRQLRRTDSRRGLQRSTQLSGRPDRGNEGEMHKDRAKSCNLM) is disordered. Basic and acidic residues predominate over residues 207-227 (RPDRGNEGEMHKDRAKSCNLM). C224 is modified (cysteine methyl ester). The S-geranylgeranyl cysteine moiety is linked to residue C224. Positions 225-227 (NLM) are cleaved as a propeptide — removed in mature form.

The protein belongs to the small GTPase superfamily. Rho family. Interacts with the Rho-GAP domain of RACGAP1. Interacts with UBXD5. Interacts with PRAG1. As to expression, expressed specifically in neurons in the brain and spinal cord and also in hepatic stellate cells.

It is found in the cytoplasmic vesicle. It localises to the secretory vesicle. The protein resides in the acrosome membrane. May be specifically involved in neuronal and hepatic functions. Is a C3 toxin-insensitive member of the Rho subfamily. This Mus musculus (Mouse) protein is Rho-related GTP-binding protein RhoN (Rnd2).